Consider the following 231-residue polypeptide: Triggering receptor expressed on myeloid cells 1 (231 aa).

An N-terminal signal peptide occupies residues 1 to 20 (MRKTRLWGLLWMFFVSELLA). The Extracellular segment spans residues 21 to 202 (ATKLTEEKYE…TDIIRVPVFN (182 aa)). In terms of domain architecture, Ig-like V-type spans 26-131 (EEKYELKEGQ…LFDRIRLVVT (106 aa)). Cysteines 41 and 110 form a disulfide. 2 stretches are compositionally biased toward polar residues: residues 134–157 (SSGT…TTTK) and 164–182 (TSPT…DVST). The segment at 134–182 (SSGTPGSSENSTPNVYKTPPTTTKALRPLYTSPTTVTQAPPKSTADVST) is disordered. Asn188 and Asn191 each carry an N-linked (GlcNAc...) asparagine glycan. The chain crosses the membrane as a helical span at residues 203-223 (IAILVAGGFLSKSLVFSVLFA). Residues 224 to 231 (VTLRSFVP) are Cytoplasmic-facing.

In terms of assembly, monomer. Homomultimer; when activated. Interacts with TYROBP/DAP12. Interacts with TLR4.

It is found in the cell membrane. Cell surface receptor that plays important roles in innate and adaptive immunity by amplifying inflammatory responses. Upon activation by various ligands such as PGLYRP1, HMGB1 or HSP70, multimerizes and forms a complex with transmembrane adapter TYROBP/DAP12. In turn, initiates a SYK-mediated cascade of tyrosine phosphorylation, activating multiple downstream mediators such as BTK, MAPK1, MAPK3 or phospholipase C-gamma. This cascade promotes the neutrophil- and macrophage-mediated release of pro-inflammatory cytokines and/or chemokines, as well as their migration and thereby amplifies inflammatory responses that are triggered by bacterial and fungal infections. By also promoting the amplification of inflammatory signals that are initially triggered by Toll-like receptor (TLR) and NOD-like receptor engagement, plays a major role in the pathophysiology of acute and chronic inflammatory diseases of different etiologies including septic shock and atherosclerosis. This chain is Triggering receptor expressed on myeloid cells 1 (TREM1), found in Pongo abelii (Sumatran orangutan).